The primary structure comprises 245 residues: Bis(5'-nucleosyl)-tetraphosphatase PrpE [asymmetrical] (245 aa).

It belongs to the PrpE family. Ni(2+) serves as cofactor.

The enzyme catalyses P(1),P(4)-bis(5'-guanosyl) tetraphosphate + H2O = GMP + GTP + 2 H(+). In terms of biological role, asymmetrically hydrolyzes Ap4p to yield AMP and ATP. The sequence is that of Bis(5'-nucleosyl)-tetraphosphatase PrpE [asymmetrical] from Geobacillus thermodenitrificans (strain NG80-2).